Here is a 326-residue protein sequence, read N- to C-terminus: Undecaprenyl-phosphate 4-deoxy-4-formamido-L-arabinose transferase (326 aa).

2 helical membrane-spanning segments follow: residues 235–255 (MLSV…LLLI) and 270–290 (VFML…GMGL).

This sequence belongs to the glycosyltransferase 2 family.

The protein localises to the cell inner membrane. It carries out the reaction UDP-4-deoxy-4-formamido-beta-L-arabinose + di-trans,octa-cis-undecaprenyl phosphate = 4-deoxy-4-formamido-alpha-L-arabinopyranosyl di-trans,octa-cis-undecaprenyl phosphate + UDP. It functions in the pathway glycolipid biosynthesis; 4-amino-4-deoxy-alpha-L-arabinose undecaprenyl phosphate biosynthesis; 4-amino-4-deoxy-alpha-L-arabinose undecaprenyl phosphate from UDP-4-deoxy-4-formamido-beta-L-arabinose and undecaprenyl phosphate: step 1/2. Its pathway is bacterial outer membrane biogenesis; lipopolysaccharide biosynthesis. In terms of biological role, catalyzes the transfer of 4-deoxy-4-formamido-L-arabinose from UDP to undecaprenyl phosphate. The modified arabinose is attached to lipid A and is required for resistance to polymyxin and cationic antimicrobial peptides. The polypeptide is Undecaprenyl-phosphate 4-deoxy-4-formamido-L-arabinose transferase (Sodalis glossinidius (strain morsitans)).